The following is a 158-amino-acid chain: 6,7-dimethyl-8-ribityllumazine synthase (158 aa).

Residues F24, 62–64, and 86–88 each bind 5-amino-6-(D-ribitylamino)uracil; these read CFE and AVI. 91 to 92 serves as a coordination point for (2S)-2-hydroxy-3-oxobutyl phosphate; the sequence is DT. The active-site Proton donor is the H94. F119 serves as a coordination point for 5-amino-6-(D-ribitylamino)uracil. R133 is a (2S)-2-hydroxy-3-oxobutyl phosphate binding site.

The protein belongs to the DMRL synthase family.

The catalysed reaction is (2S)-2-hydroxy-3-oxobutyl phosphate + 5-amino-6-(D-ribitylamino)uracil = 6,7-dimethyl-8-(1-D-ribityl)lumazine + phosphate + 2 H2O + H(+). It functions in the pathway cofactor biosynthesis; riboflavin biosynthesis; riboflavin from 2-hydroxy-3-oxobutyl phosphate and 5-amino-6-(D-ribitylamino)uracil: step 1/2. In terms of biological role, catalyzes the formation of 6,7-dimethyl-8-ribityllumazine by condensation of 5-amino-6-(D-ribitylamino)uracil with 3,4-dihydroxy-2-butanone 4-phosphate. This is the penultimate step in the biosynthesis of riboflavin. This Picosynechococcus sp. (strain ATCC 27264 / PCC 7002 / PR-6) (Agmenellum quadruplicatum) protein is 6,7-dimethyl-8-ribityllumazine synthase.